We begin with the raw amino-acid sequence, 802 residues long: Xylanase/beta-glucanase (802 aa).

The N-terminal stretch at 1 to 31 (MKKSIFKRYAAAVGLMASVLMFTAVPTTSNA) is a signal peptide. The GH11 domain maps to 32-239 (ADDQKTGKVG…SNGSANVKSI (208 aa)). E124 functions as the Nucleophile in the catalytic mechanism. E226 serves as the catalytic Proton donor. The tract at residues 245–523 (IDIPDPEPIK…SYLEGHDPSK (279 aa)) is b. The region spanning 258–404 (NGYYLKENFE…YMDGAYAGVK (147 aa)) is the CBM-cenC domain. 2 disordered regions span residues 414–436 (SQSV…PSVT) and 533–564 (TTTT…YRDL). 2 stretches are compositionally biased toward low complexity: residues 419–436 (PPVT…PSVT) and 533–553 (TTTT…TTTT). In terms of domain architecture, Dockerin spans 434 to 513 (SVTKWGDANC…LIRAISELPE (80 aa)). The segment at 524–555 (TTTTTTRITTTTTTTTTTTTSKTTTTTTTTSP) is linker. A GH16 domain is found at 556–792 (AMHGGYRDLG…WVTYNKNGVQ (237 aa)). The Nucleophile role is filled by E684.

The protein in the N-terminal section; belongs to the glycosyl hydrolase 11 (cellulase G) family. In the C-terminal section; belongs to the glycosyl hydrolase 16 family.

It catalyses the reaction Endohydrolysis of (1-&gt;4)-beta-D-xylosidic linkages in xylans.. The enzyme catalyses Hydrolysis of (1-&gt;4)-beta-D-glucosidic linkages in beta-D-glucans containing (1-&gt;3)- and (1-&gt;4)-bonds.. The protein operates within glycan degradation; xylan degradation. Its function is as follows. Contains two catalytic domains with xylanase and endo-beta-1,3-1,4 glucanase activities. The protein is Xylanase/beta-glucanase (xynD) of Ruminococcus flavefaciens.